Here is a 363-residue protein sequence, read N- to C-terminus: Peptide chain release factor 2 (363 aa).

N5-methylglutamine is present on Q251.

The protein belongs to the prokaryotic/mitochondrial release factor family. In terms of processing, methylated by PrmC. Methylation increases the termination efficiency of RF2.

The protein resides in the cytoplasm. Its function is as follows. Peptide chain release factor 2 directs the termination of translation in response to the peptide chain termination codons UGA and UAA. The chain is Peptide chain release factor 2 (prfB) from Helicobacter pylori (strain ATCC 700392 / 26695) (Campylobacter pylori).